Here is a 1191-residue protein sequence, read N- to C-terminus: Solute carrier family 12 member 2 (1191 aa).

The segment at 1–166 is disordered; sequence MEPAFPASSA…MSEGSLHSSG (166 aa). Residues 1–258 are Cytoplasmic-facing; it reads MEPAFPASSA…ADNKGVVKFG (258 aa). Low complexity-rich tracts occupy residues 13-25, 59-69, 80-99, and 131-141; these read QSQSGPEPGAGQQ, KGQTAAQPAAA, AAAPSPASPAAAAEPPAAAA, and SASSAHGGHQP. Over residues 142–155 the composition is skewed to polar residues; the sequence is PSESMNGYPQNGDT. Residues Thr175, Thr179, and Thr184 each carry the phosphothreonine; by OXSR1 and STK39 modification. Thr189 and Thr202 each carry phosphothreonine. The discontinuously helical transmembrane segment at 259 to 288 threads the bilayer; the sequence is WIKGVLVRCMLNIWGVMLFIRLSWIVGHAG. Leu269 contacts Na(+). Residues Asn270 and Ile271 each coordinate K(+). Residue Trp272 coordinates Na(+). Residues Gly273, Val274, and Met275 each coordinate chloride. A helical membrane pass occupies residues 289–308; sequence IGLALLVIGTATVVTTITGL. Residues 309–339 lie on the Cytoplasmic side of the membrane; sequence STSAITTNGFVRGGGAYYLISRSLGPEFGGA. The helical transmembrane segment at 340-367 threads the bilayer; it reads IGLIFAFANAVAVAMYVVGFAETVRDLL. Position 344 (Phe344) interacts with chloride. Tyr355 lines the K(+) pocket. Residues 368–377 lie on the Extracellular side of the membrane; the sequence is VEHNALMIDE. Residues 378 to 401 form a helical membrane-spanning segment; it reads MSDIRIIGSVTIVVLFGISVAGME. The Cytoplasmic portion of the chain corresponds to 402-404; it reads WEA. A helical transmembrane segment spans residues 405 to 426; the sequence is KAQIVLLGILLLAIVNFTVGTF. At 427-458 the chain is on the extracellular side; that stretch reads IPANDKRAKGFFNYRGEIFSENFVPDFRDGED. Residues 459–476 traverse the membrane as a discontinuously helical segment; it reads FFSVFAIFFPAATGILAG. Residues Pro468, Ala469, and Thr471 each contribute to the K(+) site. Chloride-binding residues include Pro468 and Ala469. The chloride site is built by Gly472 and Ile473. The Cytoplasmic segment spans residues 477–491; the sequence is ANISGDLADPQLAIP. A helical membrane pass occupies residues 492-513; it reads KGTLLAILITTIVYAGAAVSVG. The Extracellular segment spans residues 514–571; sequence SCIVREATGNLTDAIIPGTVTNCTNVACKLGFNFSSCATNKCSYGLMNDFQVMSLVSG. N-linked (GlcNAc...) asparagine glycans are attached at residues Asn523 and Asn535. Cysteines 536 and 541 form a disulfide. N-linked (GlcNAc...) asparagine glycosylation occurs at Asn546. A disulfide bond links Cys550 and Cys555. The helical transmembrane segment at 572 to 596 threads the bilayer; sequence FGPLITAGIFSATLSSALASLVSAP. Na(+)-binding residues include Ala583, Ser586, and Ser587. Residues 597 to 624 lie on the Cytoplasmic side of the membrane; the sequence is KIFQALCKDNIYPGLHVFSVGYGKNNEP. Transmembrane regions (helical) follow at residues 625 to 645 and 646 to 664; these read LRGYVLTFFIGLGFILIAELN and VIAPIISNFFLASYALINF. The chloride site is built by Phe655 and Tyr659. The Cytoplasmic portion of the chain corresponds to 665 to 687; that stretch reads SVFHASLAKSPGWRPAFRFYNMW. 2 helical membrane passes run 688 to 705 and 706 to 718; these read ISLIGAILCCGVMFVINW and WAALLTNVIVLAL. The Cytoplasmic portion of the chain corresponds to 719–1191; sequence YIYVTYKKPD…NHQSVLTFYS (473 aa). The interval 734–751 is scissor helix; the sequence is STQALTYLNALQHAIRLT. The disordered stretch occupies residues 929–972; it reads HSDADSSKPSSKSVSETNSPAVCQDQKDEEDDGKASTQPLLKKE. Positions 935–948 are enriched in low complexity; sequence SKPSSKSVSETNSP. A Phosphothreonine modification is found at Thr1114.

This sequence belongs to the SLC12A transporter family. Homodimer. In terms of processing, phosphorylated at Thr-175, Thr-179 and Thr-184 by OXSR1/OSR1 and STK39/SPAK downstream of WNK kinases (WNK1, WNK2, WNK3 or WNK4), promoting its activity. In terms of tissue distribution, strongly expressed in rectal gland, brain, gill and intestine. Also detected at lower levels in heart, kidney, and testis.

The protein resides in the basolateral cell membrane. It catalyses the reaction K(+)(out) + 2 chloride(out) + Na(+)(out) = K(+)(in) + 2 chloride(in) + Na(+)(in). With respect to regulation, activated following phosphorylation by OXSR1/OSR1 and STK39/SPAK. Inhibited by bumetanide. In terms of biological role, cation-chloride cotransporter which mediates the electroneutral transport of chloride, potassium and/or sodium ions across the membrane. Plays a vital role in the regulation of ionic balance and cell volume. The chain is Solute carrier family 12 member 2 (SLC12A2) from Squalus acanthias (Spiny dogfish).